Here is a 172-residue protein sequence, read N- to C-terminus: WW domain binding protein VOPP1 (172 aa).

The first 22 residues, 1 to 22 (MARPLGRVAALLLGLLMECTEA), serve as a signal peptide directing secretion. At 23–60 (KKHCWYFEGLYPTYYICRSYEDCCGSRCCVRALSIQRL) the chain is on the extracellular side. A helical transmembrane segment spans residues 61–81 (WYFWFLLMMGVLFCCGAGFFI). At 82-172 (RRRMYPPPLI…PPYEQVVKDK (91 aa)) the chain is on the cytoplasmic side. The segment at 139–172 (QVQPNSPHGGTTYPPPPSYCNTPPPPYEQVVKDK) is disordered. Pro residues predominate over residues 151 to 165 (YPPPPSYCNTPPPPY).

The protein belongs to the VOPP1/ECOP family. Interacts with WWOX (via WW domain).

The protein resides in the cytoplasmic vesicle membrane. It localises to the late endosome membrane. It is found in the lysosome membrane. Increases the transcriptional activity of NFKB1 by facilitating its nuclear translocation, DNA-binding and associated apoptotic response, when overexpressed. May sequester WWOX in lysosomal vesicles and thereby regulate WWOX role as tumor suppressor. The chain is WW domain binding protein VOPP1 from Rattus norvegicus (Rat).